The sequence spans 466 residues: Argininosuccinate lyase (466 aa).

The protein belongs to the lyase 1 family. Argininosuccinate lyase subfamily.

Its subcellular location is the cytoplasm. The catalysed reaction is 2-(N(omega)-L-arginino)succinate = fumarate + L-arginine. It participates in amino-acid biosynthesis; L-arginine biosynthesis; L-arginine from L-ornithine and carbamoyl phosphate: step 3/3. The sequence is that of Argininosuccinate lyase from Brucella abortus (strain S19).